We begin with the raw amino-acid sequence, 874 residues long: Valine--tRNA ligase (874 aa).

The short motif at proline 42–histidine 52 is the 'HIGH' region element. Residues lysine 522–serine 526 carry the 'KMSKS' region motif. Lysine 525 is a binding site for ATP. Residues aspartate 806–serine 874 are a coiled coil.

Belongs to the class-I aminoacyl-tRNA synthetase family. ValS type 1 subfamily. Monomer.

Its subcellular location is the cytoplasm. It carries out the reaction tRNA(Val) + L-valine + ATP = L-valyl-tRNA(Val) + AMP + diphosphate. Catalyzes the attachment of valine to tRNA(Val). As ValRS can inadvertently accommodate and process structurally similar amino acids such as threonine, to avoid such errors, it has a 'posttransfer' editing activity that hydrolyzes mischarged Thr-tRNA(Val) in a tRNA-dependent manner. The sequence is that of Valine--tRNA ligase from Petrotoga mobilis (strain DSM 10674 / SJ95).